The primary structure comprises 114 residues: Hemerythrin subunit 2 (114 aa).

Positions 26, 55, 59, 74, 78, 102, and 107 each coordinate Fe cation.

Belongs to the hemerythrin family.

Functionally, hemerythrin is a respiratory protein in blood cells of certain marine worms. The oxygen-binding site in each chain contains two iron atoms. This is Hemerythrin subunit 2 from Golfingia vulgaris (Marine worm).